The following is a 264-amino-acid chain: Pyridoxine 5'-phosphate synthase (264 aa).

Polar residues predominate over residues 1–21; sequence MTDTAQILPTTLEQNPQNTSK. Positions 1–22 are disordered; that stretch reads MTDTAQILPTTLEQNPQNTSKK. Residue asparagine 28 coordinates 3-amino-2-oxopropyl phosphate. Residue 30 to 31 coordinates 1-deoxy-D-xylulose 5-phosphate; the sequence is DH. Arginine 39 lines the 3-amino-2-oxopropyl phosphate pocket. Histidine 64 acts as the Proton acceptor in catalysis. 1-deoxy-D-xylulose 5-phosphate contacts are provided by arginine 66 and histidine 71. Glutamate 91 serves as the catalytic Proton acceptor. Position 121 (threonine 121) interacts with 1-deoxy-D-xylulose 5-phosphate. The active-site Proton donor is the histidine 217. Residues glycine 218 and 239–240 contribute to the 3-amino-2-oxopropyl phosphate site; that span reads GH.

This sequence belongs to the PNP synthase family. As to quaternary structure, homooctamer; tetramer of dimers.

It localises to the cytoplasm. It carries out the reaction 3-amino-2-oxopropyl phosphate + 1-deoxy-D-xylulose 5-phosphate = pyridoxine 5'-phosphate + phosphate + 2 H2O + H(+). It participates in cofactor biosynthesis; pyridoxine 5'-phosphate biosynthesis; pyridoxine 5'-phosphate from D-erythrose 4-phosphate: step 5/5. In terms of biological role, catalyzes the complicated ring closure reaction between the two acyclic compounds 1-deoxy-D-xylulose-5-phosphate (DXP) and 3-amino-2-oxopropyl phosphate (1-amino-acetone-3-phosphate or AAP) to form pyridoxine 5'-phosphate (PNP) and inorganic phosphate. The protein is Pyridoxine 5'-phosphate synthase of Psychrobacter cryohalolentis (strain ATCC BAA-1226 / DSM 17306 / VKM B-2378 / K5).